Here is a 494-residue protein sequence, read N- to C-terminus: Integrin beta-like protein 1 (494 aa).

The first 23 residues, 1–23, serve as a signal peptide directing secretion; sequence MRPPGFRNFLLLASSLLFAGLSA. 40 disulfides stabilise this stretch: Cys40-Cys71, Cys51-Cys69, Cys63-Cys74, Cys76-Cys89, Cys91-Cys112, Cys96-Cys110, Cys104-Cys115, Cys117-Cys126, Cys132-Cys159, Cys143-Cys157, Cys151-Cys162, Cys164-Cys178, Cys180-Cys202, Cys185-Cys200, Cys194-Cys205, Cys207-Cys216, Cys220-Cys247, Cys231-Cys245, Cys239-Cys250, Cys252-Cys269, Cys271-Cys296, Cys276-Cys294, Cys288-Cys299, Cys301-Cys310, Cys316-Cys343, Cys327-Cys341, Cys335-Cys346, Cys348-Cys361, Cys363-Cys384, Cys368-Cys382, Cys376-Cys387, Cys389-Cys398, Cys404-Cys431, Cys415-Cys429, Cys423-Cys434, Cys436-Cys448, Cys450-Cys471, Cys455-Cys469, Cys463-Cys474, and Cys476-Cys485. I-EGF domains follow at residues 40-90, 91-127, 132-179, 180-217, 220-270, 271-311, 316-362, 363-399, 404-449, and 450-486; these read CRLS…PLCE, CHEW…DACQ, CDLT…KFCE, CDDR…DKCE, CDIT…DTCE, CDER…KKCE, CTLS…KTCE, CDDR…KLCQ, CNMT…EFCD, and CDDR…NACE. One copy of the I repeat lies at 51 to 95; that stretch reads CRAPGQPPGAALCHGRGRCDCGVCICHVTEPGMFFGPLCECHEWV. The cysteine-rich tandem repeats stretch occupies residues 51-494; it reads CRAPGQPPGA…CEIWLGSEYP (444 aa). One copy of the II repeat lies at 96–142; the sequence is CETYDGSTCAGHGKCDCGKCKCDQGWYGDACQYPTNCDLTKKKSNQM. Residues 143-184 form an III repeat; sequence CKNSQDIICSNAGTCHCGRCKCDNSDGSGLVYGKFCECDDRE. An IV repeat occupies 185–230; the sequence is CIDDETEEICGGHGKCYCGNCYCKAGWHGDKCEFQCDITPWESKRR. The V repeat unit spans residues 231–275; the sequence is CTSPDGKICSNRGTCVCGECTCHDVDPTGDWGDIHGDTCECDERD. A VI repeat occupies 276–326; that stretch reads CRAVYDRYSDDFCSGHGQCNCGRCDCKAGWYGKKCEHPQSCTLSAEESIRK. One copy of the VII repeat lies at 327-367; that stretch reads CQGSSDLPCSGRGKCECGKCTCYPPGDRRVYGKTCECDDRR. A VIII repeat occupies 368–414; sequence CEDLDGVVCGGHGTCSCGRCVCERGWFGKLCQHPRKCNMTEEQSKNL. Residue Asn405 is glycosylated (N-linked (GlcNAc...) asparagine). One copy of the IX repeat lies at 415–454; sequence CESADGILCSGKGSCHCGKCICSAEEWYISGEFCDCDDRD. Residues 455-494 form a X repeat; sequence CDKHDGLICTGNGICSCGNCECWDGWNGNACEIWLGSEYP.

Widely expressed in many tissues, but readily detectable only in aorta.

Its subcellular location is the secreted. This is Integrin beta-like protein 1 (ITGBL1) from Homo sapiens (Human).